A 128-amino-acid polypeptide reads, in one-letter code: Azurin (128 aa).

A Plastocyanin-like domain is found at 1 to 128 (AECKVTVDST…SMMKGTVTVK (128 aa)). A disulfide bond links C3 and C26. Cu cation-binding residues include H46, C112, H117, and M121.

Its subcellular location is the periplasm. Its function is as follows. Transfers electrons from cytochrome c551 to cytochrome oxidase. This Pseudomonas fluorescens biotype A protein is Azurin.